Consider the following 149-residue polypeptide: Nucleoside diphosphate kinase (149 aa).

ATP contacts are provided by Lys-9, Phe-57, Arg-85, Thr-91, Arg-102, and Asn-112. The active-site Pros-phosphohistidine intermediate is the His-115.

Belongs to the NDK family. As to quaternary structure, homotetramer. The cofactor is Mg(2+).

The protein localises to the cytoplasm. It catalyses the reaction a 2'-deoxyribonucleoside 5'-diphosphate + ATP = a 2'-deoxyribonucleoside 5'-triphosphate + ADP. It carries out the reaction a ribonucleoside 5'-diphosphate + ATP = a ribonucleoside 5'-triphosphate + ADP. Its function is as follows. Major role in the synthesis of nucleoside triphosphates other than ATP. The ATP gamma phosphate is transferred to the NDP beta phosphate via a ping-pong mechanism, using a phosphorylated active-site intermediate. This chain is Nucleoside diphosphate kinase, found in Trichodesmium erythraeum (strain IMS101).